The sequence spans 1017 residues: Centriole and centriolar satellite protein OFD1 (1017 aa).

The region spanning 69–101 is the LisH domain; it reads LIGASNSLVADHLQRCGYEYSLSVFFPESGLAK. Coiled coils occupy residues 188 to 557 and 626 to 659; these read PHRS…ENEV and EFIA…RATQ. A mediates homooligomerization region spans residues 609 to 666; that stretch reads PPYVNTATEASSPESDFEFIASSTKAKVRELEQEAERLEKAFRTYYQRATQNPSTSPQ. Disordered regions lie at residues 657–676, 685–705, 721–749, and 769–801; these read ATQN…SVNS, SSSM…QPLG, GSVV…RSLD, and LDRV…SFSG. 8 positions are modified to phosphoserine: serine 664, serine 670, serine 687, serine 722, serine 737, serine 747, serine 791, and serine 823. Residues 722 to 740 are compositionally biased toward low complexity; the sequence is SVVSRPRRTSSSTRLSSTP. The stretch at 895-966 forms a coiled coil; it reads ELHMKERRQR…AHCENTLEKY (72 aa). Positions 897–988 are enriched in basic and acidic residues; it reads HMKERRQREE…ADKSSKKSGK (92 aa). Residues 897 to 1017 form a disordered region; it reads HMKERRQREE…FSHEEPDDMW (121 aa).

It belongs to the OFD1 family. Homooligomer. Interacts with LCA5. Interacts with RUVBL1; the interaction is direct and may mediate interaction with the NuA4 histone acetyltransferase complex. Interacts with SDCCAG8; the interaction is direct. Interacts with MAP1LC3B. Interacts with C2CD3; OFD1 may act as a negative regulator of C2CD3. Forms a complex with KIAA0753/OFIP and CEP20/FOR20; the interaction with CEP20 is detected only in the presence of KIAA0753. Interacts with PCM1; this interaction may be mediated by KIAA0753/OFIP. Interacts with TBC1D31; regulates OFD1 activity in cilium assembly. Phosphorylated. Phosphorylation at Ser-737, by the cAMP-dependent protein kinase PKA, triggers ubiquitination and proteasomal degradation of OFD1. Also increases its interaction with TBC1D31 and regulates its function in ciliogenesis. Post-translationally, ubiquitinated by PJA2, upon phosphorylation at Ser-737 by PKA, leads to the proteasomal degradation of OFD1.

It localises to the cytoplasm. The protein localises to the cytoskeleton. The protein resides in the microtubule organizing center. Its subcellular location is the centrosome. It is found in the centriole. It localises to the centriolar satellite. The protein localises to the cilium basal body. The protein resides in the nucleus. Its function is as follows. Component of the centrioles controlling mother and daughter centrioles length. Recruits to the centriole IFT88 and centriole distal appendage-specific proteins including CEP164. Involved in the biogenesis of the cilium, a centriole-associated function. The cilium is a cell surface projection found in many vertebrate cells required to transduce signals important for development and tissue homeostasis. Plays an important role in development by regulating Wnt signaling and the specification of the left-right axis. Only OFD1 localized at the centriolar satellites is removed by autophagy, which is an important step in the ciliogenesis regulation. The chain is Centriole and centriolar satellite protein OFD1 (Ofd1) from Mus musculus (Mouse).